A 239-amino-acid chain; its full sequence is Small ribosomal subunit protein uS2 (239 aa).

This sequence belongs to the universal ribosomal protein uS2 family.

In Histophilus somni (strain 129Pt) (Haemophilus somnus), this protein is Small ribosomal subunit protein uS2.